Consider the following 363-residue polypeptide: Chorismate synthase (363 aa).

Residues Arg-48 and Arg-54 each coordinate NADP(+). FMN-binding positions include 125 to 127, 238 to 239, Gly-278, 293 to 297, and Arg-319; these read RSS, NA, and KPTSS.

This sequence belongs to the chorismate synthase family. Homotetramer. It depends on FMNH2 as a cofactor.

It catalyses the reaction 5-O-(1-carboxyvinyl)-3-phosphoshikimate = chorismate + phosphate. It functions in the pathway metabolic intermediate biosynthesis; chorismate biosynthesis; chorismate from D-erythrose 4-phosphate and phosphoenolpyruvate: step 7/7. Functionally, catalyzes the anti-1,4-elimination of the C-3 phosphate and the C-6 proR hydrogen from 5-enolpyruvylshikimate-3-phosphate (EPSP) to yield chorismate, which is the branch point compound that serves as the starting substrate for the three terminal pathways of aromatic amino acid biosynthesis. This reaction introduces a second double bond into the aromatic ring system. This chain is Chorismate synthase, found in Acidithiobacillus ferrooxidans (strain ATCC 23270 / DSM 14882 / CIP 104768 / NCIMB 8455) (Ferrobacillus ferrooxidans (strain ATCC 23270)).